The sequence spans 169 residues: uncharacterized protein (169 aa).

The Nudix hydrolase domain occupies 28–157 (ELHLVVHVCI…EFIPYFFLNQ (130 aa)). The Nudix box signature appears at 65-87 (AGSALKGETSRQAAEREVKEELG). Mg(2+) is bound by residues E81 and E85.

The protein belongs to the Nudix hydrolase family. It depends on Mg(2+) as a cofactor.

This is an uncharacterized protein from Listeria innocua serovar 6a (strain ATCC BAA-680 / CLIP 11262).